The chain runs to 717 residues: Homeobox protein araucan (717 aa).

7 disordered regions span residues 46-80 (APAMSPTGGQDCQGSQPSGGAGGDASSGALSPNAL), 94-130 (GGSSAGGGGPADLATGGSLDGNGVGTTPTAGGAGGGG), 317-371 (NKMT…AIDE), 395-418 (SGGYPGGGGSSSGHPGGYHPYHHQ), 478-516 (TPPPAYMGHQSMPLQQQQQQQQQQQQAQHQYPPSEAGRD), 549-615 (TNNS…ASQR), and 675-717 (ARLG…KFTN). Over residues 94-103 (GGSSAGGGGP) the composition is skewed to gly residues. The homeobox; TALE-type DNA-binding region spans 255–317 (LAARRKNATR…NARRRLKKEN (63 aa)). Positions 317–327 (NKMTWEPKNRT) are enriched in basic and acidic residues. S336 bears the Phosphoserine mark. Residues 337 to 347 (DDEKDKEDLEP) show a composition bias toward basic and acidic residues. Over residues 395-410 (SGGYPGGGGSSSGHPG) the composition is skewed to gly residues. Composition is skewed to low complexity over residues 492 to 507 (QQQQQQQQQQQQAQHQ), 559 to 589 (PPQQQQPQQQQQQLQQGGTIHTTGSSSGPII), 599 to 614 (QQQQQLQQQSQSTASQ), and 687 to 698 (SSGNSSSSSSSS).

The protein belongs to the TALE/IRO homeobox family.

It localises to the nucleus. Its function is as follows. Controls proneural and vein forming genes. Positive transcriptional controller of AC-SC (achaete-scute). May act as an activator that interacts with the transcriptional complex assembled on the AC and SC promoters and participates in transcription initiation. This Drosophila melanogaster (Fruit fly) protein is Homeobox protein araucan (ara).